The following is a 255-amino-acid chain: F-box/SPRY domain-containing protein 1 (255 aa).

Residues 3-51 (DPVAALCNYNVLEVIFSYLELDDLSHCSQVCKSWYHFLNDENSDVWRWH) form the F-box domain. The 193-residue stretch at 61-253 (LKSDLLSSVP…VSMVYLGTPL (193 aa)) folds into the B30.2/SPRY domain.

It belongs to the FBXO45/Fsn family. In terms of assembly, component of an E3 ubiquitin ligase complex composed of hiw and Fsn.

It is found in the synapse. It participates in protein modification; protein ubiquitination. Required in the presynaptic motoneuron to down-regulate the levels of wnd and restrain synaptic terminal growth at the neuromuscular junction (NMJ). This is F-box/SPRY domain-containing protein 1 from Drosophila sechellia (Fruit fly).